The primary structure comprises 433 residues: Phosphoribosylamine--glycine ligase (433 aa).

Positions Glu111 to Asp317 constitute an ATP-grasp domain. An ATP-binding site is contributed by Glu138–Thr194. Mg(2+) is bound by residues Gln275, Glu287, and Asn289. Residues Gln275, Glu287, and Asn289 each coordinate Mn(2+).

This sequence belongs to the GARS family. The cofactor is Mg(2+). Mn(2+) is required as a cofactor.

The enzyme catalyses 5-phospho-beta-D-ribosylamine + glycine + ATP = N(1)-(5-phospho-beta-D-ribosyl)glycinamide + ADP + phosphate + H(+). It functions in the pathway purine metabolism; IMP biosynthesis via de novo pathway; N(1)-(5-phospho-D-ribosyl)glycinamide from 5-phospho-alpha-D-ribose 1-diphosphate: step 2/2. The chain is Phosphoribosylamine--glycine ligase from Methanocella arvoryzae (strain DSM 22066 / NBRC 105507 / MRE50).